Consider the following 119-residue polypeptide: Large ribosomal subunit protein uL18 (119 aa).

The interval 1–20 (MSQIDKASRRQKIKDRSRVK) is disordered. Basic residues predominate over residues 9 to 20 (RRQKIKDRSRVK).

The protein belongs to the universal ribosomal protein uL18 family. As to quaternary structure, part of the 50S ribosomal subunit; part of the 5S rRNA/L5/L18/L25 subcomplex. Contacts the 5S and 23S rRNAs.

This is one of the proteins that bind and probably mediate the attachment of the 5S RNA into the large ribosomal subunit, where it forms part of the central protuberance. This chain is Large ribosomal subunit protein uL18, found in Chlorobium phaeobacteroides (strain DSM 266 / SMG 266 / 2430).